A 600-amino-acid polypeptide reads, in one-letter code: Aspartate--tRNA(Asp/Asn) ligase (600 aa).

L-aspartate is bound at residue glutamate 174. Positions 198–201 are aspartate; sequence QLFK. Arginine 220 is a binding site for L-aspartate. ATP is bound by residues 220 to 222 and glutamine 229; that span reads RDE. Histidine 457 contacts L-aspartate. Glutamate 491 is a binding site for ATP. Arginine 498 contributes to the L-aspartate binding site. 543-546 serves as a coordination point for ATP; the sequence is GLDR.

Belongs to the class-II aminoacyl-tRNA synthetase family. Type 1 subfamily. In terms of assembly, homodimer.

The protein localises to the cytoplasm. The enzyme catalyses tRNA(Asx) + L-aspartate + ATP = L-aspartyl-tRNA(Asx) + AMP + diphosphate. Its function is as follows. Aspartyl-tRNA synthetase with relaxed tRNA specificity since it is able to aspartylate not only its cognate tRNA(Asp) but also tRNA(Asn). Reaction proceeds in two steps: L-aspartate is first activated by ATP to form Asp-AMP and then transferred to the acceptor end of tRNA(Asp/Asn). The protein is Aspartate--tRNA(Asp/Asn) ligase of Burkholderia multivorans (strain ATCC 17616 / 249).